The chain runs to 165 residues: Cyclic pyranopterin monophosphate synthase (165 aa).

Substrate-binding positions include leucine 76–histidine 78 and methionine 114–glutamate 115. Residue aspartate 129 is part of the active site.

It belongs to the MoaC family. In terms of assembly, homohexamer; trimer of dimers.

The catalysed reaction is (8S)-3',8-cyclo-7,8-dihydroguanosine 5'-triphosphate = cyclic pyranopterin phosphate + diphosphate. It participates in cofactor biosynthesis; molybdopterin biosynthesis. Its function is as follows. Catalyzes the conversion of (8S)-3',8-cyclo-7,8-dihydroguanosine 5'-triphosphate to cyclic pyranopterin monophosphate (cPMP). The sequence is that of Cyclic pyranopterin monophosphate synthase from Brucella melitensis biotype 2 (strain ATCC 23457).